A 650-amino-acid polypeptide reads, in one-letter code: Macrolide export ATP-binding/permease protein MacB (650 aa).

The ABC transporter domain maps to 5-243 (LELKDIRRSY…AGGTEPVVNT (239 aa)). ATP is bound at residue 41 to 48 (GASGSGKS). 5 consecutive transmembrane segments (helical) span residues 273–293 (LLTM…VVVG), 523–543 (LFLT…VMNI), 554–574 (ANDI…HLFF), 580–600 (VLPA…AFTL), and 613–633 (PLAL…FGWL).

The protein belongs to the ABC transporter superfamily. Macrolide exporter (TC 3.A.1.122) family. Homodimer. Part of the tripartite efflux system MacAB-TolC, which is composed of an inner membrane transporter, MacB, a periplasmic membrane fusion protein, MacA, and an outer membrane component, TolC. The complex forms a large protein conduit and can translocate molecules across both the inner and outer membranes. Interacts with MacA.

The protein localises to the cell inner membrane. Part of the tripartite efflux system MacAB-TolC. MacB is a non-canonical ABC transporter that contains transmembrane domains (TMD), which form a pore in the inner membrane, and an ATP-binding domain (NBD), which is responsible for energy generation. Confers resistance against macrolides. This Shigella dysenteriae serotype 1 (strain Sd197) protein is Macrolide export ATP-binding/permease protein MacB.